A 328-amino-acid chain; its full sequence is Tetraacyldisaccharide 4'-kinase (328 aa).

ATP is bound at residue 55-62; the sequence is TAGGNGKT.

This sequence belongs to the LpxK family.

The enzyme catalyses a lipid A disaccharide + ATP = a lipid IVA + ADP + H(+). It participates in glycolipid biosynthesis; lipid IV(A) biosynthesis; lipid IV(A) from (3R)-3-hydroxytetradecanoyl-[acyl-carrier-protein] and UDP-N-acetyl-alpha-D-glucosamine: step 6/6. Transfers the gamma-phosphate of ATP to the 4'-position of a tetraacyldisaccharide 1-phosphate intermediate (termed DS-1-P) to form tetraacyldisaccharide 1,4'-bis-phosphate (lipid IVA). The protein is Tetraacyldisaccharide 4'-kinase of Escherichia fergusonii (strain ATCC 35469 / DSM 13698 / CCUG 18766 / IAM 14443 / JCM 21226 / LMG 7866 / NBRC 102419 / NCTC 12128 / CDC 0568-73).